A 696-amino-acid polypeptide reads, in one-letter code: Polyribonucleotide nucleotidyltransferase (696 aa).

Residues Asp-489 and Asp-495 each contribute to the Mg(2+) site. Positions 556–615 (PQYVTMKINPEKIRDVIGKGGVVIREITEATNCAIDISDDGTIKIAAHTTEEGEAAKRRI) constitute a KH domain. Residues 625-693 (GKVYEGTVVK…RQGRVRLSMK (69 aa)) enclose the S1 motif domain.

It belongs to the polyribonucleotide nucleotidyltransferase family. In terms of assembly, component of the RNA degradosome, which is a multiprotein complex involved in RNA processing and mRNA degradation. Requires Mg(2+) as cofactor.

The protein resides in the cytoplasm. It catalyses the reaction RNA(n+1) + phosphate = RNA(n) + a ribonucleoside 5'-diphosphate. Its function is as follows. Involved in mRNA degradation. Catalyzes the phosphorolysis of single-stranded polyribonucleotides processively in the 3'- to 5'-direction. This is Polyribonucleotide nucleotidyltransferase from Coxiella burnetii (strain CbuK_Q154) (Coxiella burnetii (strain Q154)).